A 431-amino-acid polypeptide reads, in one-letter code: Glutamate-1-semialdehyde 2,1-aminomutase (431 aa).

K265 is subject to N6-(pyridoxal phosphate)lysine.

Belongs to the class-III pyridoxal-phosphate-dependent aminotransferase family. HemL subfamily. Homodimer. Pyridoxal 5'-phosphate is required as a cofactor.

The protein resides in the cytoplasm. The enzyme catalyses (S)-4-amino-5-oxopentanoate = 5-aminolevulinate. Its pathway is porphyrin-containing compound metabolism; protoporphyrin-IX biosynthesis; 5-aminolevulinate from L-glutamyl-tRNA(Glu): step 2/2. The sequence is that of Glutamate-1-semialdehyde 2,1-aminomutase from Vibrio vulnificus (strain YJ016).